The following is a 201-amino-acid chain: Molybdenum cofactor guanylyltransferase (201 aa).

GTP is bound by residues 15–17, Lys-28, Asp-74, and Asp-104; that span reads LCG. Asp-104 provides a ligand contact to Mg(2+).

The protein belongs to the MobA family. As to quaternary structure, monomer. Mg(2+) serves as cofactor.

The protein localises to the cytoplasm. It catalyses the reaction Mo-molybdopterin + GTP + H(+) = Mo-molybdopterin guanine dinucleotide + diphosphate. In terms of biological role, transfers a GMP moiety from GTP to Mo-molybdopterin (Mo-MPT) cofactor (Moco or molybdenum cofactor) to form Mo-molybdopterin guanine dinucleotide (Mo-MGD) cofactor. This Ectopseudomonas mendocina (strain ymp) (Pseudomonas mendocina) protein is Molybdenum cofactor guanylyltransferase.